The chain runs to 328 residues: Delta-aminolevulinic acid dehydratase (328 aa).

The active-site Schiff-base intermediate with substrate is K200. Residues R210 and K222 each coordinate 5-aminolevulinate. Residue E238 participates in Mg(2+) binding. The active-site Schiff-base intermediate with substrate is the K253. Residues S279 and Y318 each contribute to the 5-aminolevulinate site.

It belongs to the ALAD family. Homooctamer.

It carries out the reaction 2 5-aminolevulinate = porphobilinogen + 2 H2O + H(+). It functions in the pathway porphyrin-containing compound metabolism; protoporphyrin-IX biosynthesis; coproporphyrinogen-III from 5-aminolevulinate: step 1/4. With respect to regulation, stimulated by magnesium, inhibited by zinc. Its function is as follows. Catalyzes an early step in the biosynthesis of tetrapyrroles. Binds two molecules of 5-aminolevulinate per subunit, each at a distinct site, and catalyzes their condensation to form porphobilinogen. The protein is Delta-aminolevulinic acid dehydratase (hemB) of Chlorobaculum parvum (strain DSM 263 / NCIMB 8327) (Chlorobium vibrioforme subsp. thiosulfatophilum).